We begin with the raw amino-acid sequence, 216 residues long: Maintenance of carboxysome distribution protein A (216 aa).

ATP is bound by residues Gly16, Gly17, Gly19, Lys20, Thr21, Thr22, and Gln45. Thr21 is a Mg(2+) binding site.

It belongs to the ParA family. McdA subfamily. In terms of assembly, self-associates, associates with McdB.

It is found in the cytoplasm. The protein resides in the nucleoid. The catalysed reaction is ATP + H2O = ADP + phosphate + H(+). Functionally, mcdA and McdB together mediate carboxysome positioning on the nucleoid and prevent their aggregation in the cell. McdA is an ATPase that forms dynamic gradients on the nucleoid in response to adapter protein McdB, which associates with carboxysomes. The interplay between McdA gradients on the nucleoid and McdB-bound carboxysomes result in the equal spacing of Cbs along the cell length. Incorrect positioning (aggregation) of carboxysomes results in reduced CO(2) fixation by encapsulated form 1 ribulose-1,5-bisphosphate carboxylase (RuBisCO, cbbL/cbbS), which leads to slower growth. The polypeptide is Maintenance of carboxysome distribution protein A (Halothiobacillus neapolitanus (strain ATCC 23641 / c2) (Thiobacillus neapolitanus)).